The following is a 230-amino-acid chain: Dephospho-CoA kinase (230 aa).

Positions 3–206 (LVGLTGGIAS…EPLTWKERLR (204 aa)) constitute a DPCK domain. Residue 8–15 (GGIASGKS) coordinates ATP.

It belongs to the CoaE family.

It carries out the reaction 3'-dephospho-CoA + ATP = ADP + CoA + H(+). Its pathway is cofactor biosynthesis; coenzyme A biosynthesis; CoA from (R)-pantothenate: step 5/5. Its function is as follows. Catalyzes the phosphorylation of the 3'-hydroxyl group of dephosphocoenzyme A to form coenzyme A. The sequence is that of Dephospho-CoA kinase from Oryza sativa subsp. japonica (Rice).